We begin with the raw amino-acid sequence, 351 residues long: Protein IQ-DOMAIN 27 (351 aa).

Residues 15–37 (KKSKDRSHVSGGDSVKGGDHSGD) form a disordered region. Residues 98–114 (EERWAAVKIQKVFRGSL) are calmodulin-binding. IQ domains follow at residues 99–127 (ERWA…GIVK) and 128–150 (LQAL…SIQT). The short motif at 191–198 (DRRTKIVE) is the Nuclear localization signal element. Residues 299–310 (SFKAKVRSHSAP) are compositionally biased toward basic residues. The tract at residues 299–351 (SFKAKVRSHSAPRQRSERQRLSLDEVMASKSSVSGVSMSHQHPPRHSCSCDPL) is disordered. The span at 312–321 (QRSERQRLSL) shows a compositional bias: basic and acidic residues. The segment covering 324–337 (VMASKSSVSGVSMS) has biased composition (low complexity).

The protein belongs to the IQD family. As to quaternary structure, binds to multiple calmodulin (CaM) in the presence of Ca(2+) and CaM-like proteins.

The protein resides in the nucleus. It localises to the nucleus envelope. Its subcellular location is the cytoplasm. The protein localises to the cytoskeleton. Its function is as follows. May be involved in cooperative interactions with calmodulins or calmodulin-like proteins. Recruits calmodulin proteins to microtubules, thus being a potential scaffold in cellular signaling and trafficking. May associate with nucleic acids and regulate gene expression at the transcriptional or post-transcriptional level. This Arabidopsis thaliana (Mouse-ear cress) protein is Protein IQ-DOMAIN 27.